We begin with the raw amino-acid sequence, 827 residues long: Lon protease (827 aa).

The disordered stretch occupies residues 1–27; that stretch reads MNDETLREQTTAESEETSPTTPSPEPE. The Lon N-terminal domain occupies 32–225; it reads LPLIPLEGAV…KVLMFYRKQF (194 aa). Position 385–392 (385–392) interacts with ATP; the sequence is GPPGVGKT. The 182-residue stretch at 625–806 folds into the Lon proteolytic domain; it reads IDQPGVAIGL…DEVLSIALLP (182 aa). Active-site residues include serine 712 and lysine 755.

Belongs to the peptidase S16 family. Homohexamer. Organized in a ring with a central cavity.

The protein resides in the cytoplasm. It catalyses the reaction Hydrolysis of proteins in presence of ATP.. In terms of biological role, ATP-dependent serine protease that mediates the selective degradation of mutant and abnormal proteins as well as certain short-lived regulatory proteins. Required for cellular homeostasis and for survival from DNA damage and developmental changes induced by stress. Degrades polypeptides processively to yield small peptide fragments that are 5 to 10 amino acids long. Binds to DNA in a double-stranded, site-specific manner. The polypeptide is Lon protease (Chloroflexus aurantiacus (strain ATCC 29366 / DSM 635 / J-10-fl)).